A 269-amino-acid chain; its full sequence is Formamidopyrimidine-DNA glycosylase (269 aa).

The active-site Schiff-base intermediate with DNA is Pro-2. Glu-3 functions as the Proton donor in the catalytic mechanism. Lys-57 serves as the catalytic Proton donor; for beta-elimination activity. Positions 90, 109, and 150 each coordinate DNA. Residues 235–269 (QVYGRKGEPCRVCGTPVVATKHAQRATFYCRHCQK) form an FPG-type zinc finger. Arg-259 serves as the catalytic Proton donor; for delta-elimination activity.

Belongs to the FPG family. In terms of assembly, monomer. The cofactor is Zn(2+).

The catalysed reaction is Hydrolysis of DNA containing ring-opened 7-methylguanine residues, releasing 2,6-diamino-4-hydroxy-5-(N-methyl)formamidopyrimidine.. It catalyses the reaction 2'-deoxyribonucleotide-(2'-deoxyribose 5'-phosphate)-2'-deoxyribonucleotide-DNA = a 3'-end 2'-deoxyribonucleotide-(2,3-dehydro-2,3-deoxyribose 5'-phosphate)-DNA + a 5'-end 5'-phospho-2'-deoxyribonucleoside-DNA + H(+). Involved in base excision repair of DNA damaged by oxidation or by mutagenic agents. Acts as a DNA glycosylase that recognizes and removes damaged bases. Has a preference for oxidized purines, such as 7,8-dihydro-8-oxoguanine (8-oxoG). Has AP (apurinic/apyrimidinic) lyase activity and introduces nicks in the DNA strand. Cleaves the DNA backbone by beta-delta elimination to generate a single-strand break at the site of the removed base with both 3'- and 5'-phosphates. The protein is Formamidopyrimidine-DNA glycosylase of Salmonella arizonae (strain ATCC BAA-731 / CDC346-86 / RSK2980).